The following is a 182-amino-acid chain: Ribosome maturation factor RimM (182 aa).

A PRC barrel domain is found at 103 to 182 (EDDYYWKDLM…RVEVDWDPGF (80 aa)).

This sequence belongs to the RimM family. In terms of assembly, binds ribosomal protein uS19.

The protein resides in the cytoplasm. In terms of biological role, an accessory protein needed during the final step in the assembly of 30S ribosomal subunit, possibly for assembly of the head region. Essential for efficient processing of 16S rRNA. May be needed both before and after RbfA during the maturation of 16S rRNA. It has affinity for free ribosomal 30S subunits but not for 70S ribosomes. The protein is Ribosome maturation factor RimM of Yersinia pestis (strain Pestoides F).